Reading from the N-terminus, the 71-residue chain is Small ribosomal subunit protein bS21 (71 aa).

A disordered region spans residues 40–71 (KPTQERKRKAAAAVKRNIRRTSRDVTKRKRLY). Basic residues predominate over residues 45–71 (RKRKAAAAVKRNIRRTSRDVTKRKRLY).

It belongs to the bacterial ribosomal protein bS21 family.

This Xylella fastidiosa (strain M23) protein is Small ribosomal subunit protein bS21.